The sequence spans 111 residues: C-type lectin lectoxin-Enh2 (111 aa).

The first 23 residues, 1–23, serve as a signal peptide directing secretion; that stretch reads MGQFTVVSLGLLAMFLSLSGAKG. Cys26 and Cys37 are joined by a disulfide. The C-type lectin domain maps to 33–108; it reads RNGVCNKLFP…CASLHPFICQ (76 aa). A Mannose-binding motif is present at residues 72–74; the sequence is EPN. Ca(2+) contacts are provided by Glu80, Asn95, and Asp96. A disulfide bridge links Cys82 with Cys99.

The protein belongs to the true venom lectin family. In terms of tissue distribution, expressed by the venom gland.

It is found in the secreted. Its function is as follows. Mannose-binding lectin which recognizes specific carbohydrate structures and agglutinates a variety of animal cells by binding to cell-surface glycoproteins and glycolipids. May be a calcium-dependent lectin. This Pseudoferania polylepis (Macleay's water snake) protein is C-type lectin lectoxin-Enh2.